Reading from the N-terminus, the 204-residue chain is Somatotropin (204 aa).

The N-terminal stretch at 1-17 is a signal peptide; that stretch reads MNSVVLQLSVVCLGVSS. Position 18 is a pyrrolidone carboxylic acid (Q18). H36 serves as a coordination point for Zn(2+). A disulfide bond links C69 and C177. E186 is a Zn(2+) binding site. C194 and C202 are joined by a disulfide.

Belongs to the somatotropin/prolactin family.

Its subcellular location is the secreted. In terms of biological role, growth hormone plays an important role in growth control and involved in the regulation of several anabolic processes. The protein is Somatotropin (gh) of Oreochromis mossambicus (Mozambique tilapia).